A 946-amino-acid polypeptide reads, in one-letter code: Sorting nexin-14 (946 aa).

2 helical membrane passes run 24-44 (ICRQ…ASLL) and 49-69 (IHIL…YCSL). The PXA domain occupies 130 to 304 (SSKVDASLSE…LLIIFIDDSP (175 aa)). The 133-residue stretch at 336 to 468 (ELKQIREQQD…CHSDEYFRQL (133 aa)) folds into the RGS domain. Ser548 carries the post-translational modification Phosphoserine. The 121-residue stretch at 570-690 (PYVDFFEDPS…DFLSPNGGET (121 aa)) folds into the PX domain.

This sequence belongs to the sorting nexin family. In terms of tissue distribution, widely expressed both in fetal and adult tissues.

Its subcellular location is the lysosome membrane. The protein resides in the late endosome membrane. It is found in the cell projection. The protein localises to the dendrite. Plays a role in maintaining normal neuronal excitability and synaptic transmission. May be involved in several stages of intracellular trafficking. Required for autophagosome clearance, possibly by mediating the fusion of lysosomes with autophagosomes. Binds phosphatidylinositol 3,5-bisphosphate (PtdIns(3,5)P2), a key component of late endosomes/lysosomes. Does not bind phosphatidylinositol 3-phosphate (PtdIns(3P)). This Homo sapiens (Human) protein is Sorting nexin-14 (SNX14).